Reading from the N-terminus, the 265-residue chain is Mlc titration factor A (265 aa).

4 residues coordinate Zn(2+): H111, H148, H152, and E211.

Belongs to the MtfA family. In terms of assembly, interacts with Mlc. Zn(2+) serves as cofactor.

The protein localises to the cytoplasm. Its function is as follows. Involved in the modulation of the activity of the glucose-phosphotransferase system (glucose-PTS). Interacts with the transcriptional repressor Mlc, preventing its interaction with DNA and leading to the modulation of expression of genes regulated by Mlc, including ptsG, which encodes the PTS system glucose-specific EIICB component. Shows zinc-dependent metallopeptidase activity. The polypeptide is Mlc titration factor A (Escherichia coli O127:H6 (strain E2348/69 / EPEC)).